Here is a 713-residue protein sequence, read N- to C-terminus: Endopolyphosphatase (713 aa).

Residues 1 to 19 are Cytoplasmic-facing; it reads MSVLIDEKSHRSSGSTRSR. A helical; Signal-anchor for type II membrane protein membrane pass occupies residues 20–40; that stretch reads IVVTVVGVLLMVSGLAVMLGH. The Vacuolar segment spans residues 41 to 713; that stretch reads QSGSANEALG…SSEYENMGMG (673 aa). Acidic residues predominate over residues 399-418; it reads SDDDDNSDSDSDDDDEDTSL. The tract at residues 399–430 is disordered; sequence SDDDDNSDSDSDDDDEDTSLEESYSNFNSPIL. Asparagine 507 and asparagine 645 each carry an N-linked (GlcNAc...) asparagine glycan. The segment covering 640-659 has biased composition (basic residues); it reads VKEKKNKSNKKSKKKKKNKD. The segment at 640 to 684 is disordered; it reads VKEKKNKSNKKSKKKKKNKDKRLLENSEPLKQDGSKDSRLEQDRV. Residues 660 to 683 are compositionally biased toward basic and acidic residues; the sequence is KRLLENSEPLKQDGSKDSRLEQDR.

The protein belongs to the endopolyphosphatase PPN1 family. A divalent metal cation serves as cofactor. In terms of processing, processing by proteases in the vacuole may be required for activation.

Its subcellular location is the vacuole membrane. It catalyses the reaction [phosphate](n+1) + n H2O = (n+1) phosphate + n H(+). Its function is as follows. Catalyzes the hydrolysis of inorganic polyphosphate (polyP) chains of many hundreds of phosphate residues into shorter lengths. This Debaryomyces hansenii (strain ATCC 36239 / CBS 767 / BCRC 21394 / JCM 1990 / NBRC 0083 / IGC 2968) (Yeast) protein is Endopolyphosphatase (PPN1).